A 373-amino-acid chain; its full sequence is Lipoyl amidotransferase LIPT1, mitochondrial (373 aa).

Residues 1–25 constitute a mitochondrion transit peptide; it reads MLIPFSMKNCFQLLCNCQVPAAGFK. The region spanning 57–243 is the BPL/LPL catalytic domain; it reads LEGKPILFFW…EYAAYHQIDN (187 aa). The (R)-lipoyl-5'-AMP site is built by Tyr107, Arg151, Lys161, and Thr179.

It belongs to the LplA family. Highly expressed in skeletal muscle and heart, moderately in kidney and pancreas, and detected at lower levels in liver, brain, placenta and lung.

The protein resides in the mitochondrion. The catalysed reaction is N(6)-[(R)-lipoyl]-L-lysyl-[glycine-cleavage complex H protein] + L-lysyl-[lipoyl-carrier protein] = L-lysyl-[glycine-cleavage complex H protein] + N(6)-[(R)-lipoyl]-L-lysyl-[lipoyl-carrier protein]. It catalyses the reaction (R)-lipoyl-5'-AMP + L-lysyl-[lipoyl-carrier protein] = N(6)-[(R)-lipoyl]-L-lysyl-[lipoyl-carrier protein] + AMP + 2 H(+). The protein operates within protein modification; protein lipoylation via exogenous pathway; protein N(6)-(lipoyl)lysine from lipoate: step 2/2. Functionally, lipoyl amidotransferase that catalyzes the transfer of lipoyl moieties from lipoyl-protein H of the glycine cleavage system (lipoyl-GCSH) to E2 subunits of the pyruvate dehydrogenase complex (PDCE2). Unable to catalyze the transfer of octanoyl from octanoyl-GCSH to PDCE2. In vitro, it is also able to catalyze the transfer of the lipoyl group from lipoyl-AMP to the specific lysine residue of lipoyl domains of lipoate-dependent enzymes but this reaction may not be physiologically relevant. The polypeptide is Lipoyl amidotransferase LIPT1, mitochondrial (Homo sapiens (Human)).